The following is an 88-amino-acid chain: uncharacterized protein (88 aa).

A signal peptide spans 1-22 (MLKASILFITISLTLMLENSYG). Cystine bridges form between Cys-59/Cys-73, Cys-66/Cys-77, and Cys-72/Cys-82.

The protein resides in the secreted. This is an uncharacterized protein from Schistosoma japonicum (Blood fluke).